The following is a 332-amino-acid chain: GDP-mannose transporter 2 (332 aa).

At 1-12 (MSSLKVSQQDKK) the chain is on the cytoplasmic side. The chain crosses the membrane as a helical span at residues 13–33 (WVNSGSVAILAYCASSILMTI). The Lumenal segment spans residues 34-47 (TNKVVMSDRTFNMN). The chain crosses the membrane as a helical span at residues 48–68 (FLLLFIQSLVCVITLLVLKVL). Residues 69–84 (GSVNFRSFNKTDARNW) lie on the Cytoplasmic side of the membrane. The chain crosses the membrane as a helical span at residues 85–105 (FPISICLVLMIFTSSKSLQYL). The Lumenal segment spans residues 106–108 (SVP). Residues 109-129 (VYTIFKNLTIIVIAYGEVLFF) form a helical membrane-spanning segment. Over 130 to 131 (GS) the chain is Cytoplasmic. Residues 132–152 (SVGNMELGSFALMIVSSLIAA) form a helical membrane-spanning segment. At 153–174 (HGDYLHSVERLKKMLGPNVSFS) the chain is on the lumenal side. A glycan (N-linked (GlcNAc...) asparagine) is linked at N170. The chain crosses the membrane as a helical span at residues 175–195 (FIVNIGYFWIAANCFASALFV). Over 196–211 (LLMRKRIQVTNFKDFD) the chain is Cytoplasmic. A helical transmembrane segment spans residues 212 to 232 (TMFYNNVLSLPLLLLGSYLFE). Residues 233–248 (DWSQENLLPHVDIDNL) lie on the Lumenal side of the membrane. N-linked (GlcNAc...) asparagine glycosylation is present at N247. A helical membrane pass occupies residues 249–269 (STMIISGLASVAISYCSGWCV). Over 270-274 (RVTSS) the chain is Cytoplasmic. Residues 275-295 (TTYSMVGALNKLPIALTGFLF) traverse the membrane as a helical segment. Topologically, residues 296 to 300 (NDAAR) are lumenal. A helical membrane pass occupies residues 301-321 (NLSSAASILLGFASGIIYAVA). Residues 322 to 332 (KQKKLQNSEKI) lie on the Cytoplasmic side of the membrane.

This sequence belongs to the TPT transporter family. SLC35D subfamily. As to quaternary structure, homooligomer.

Its subcellular location is the golgi apparatus membrane. It localises to the cytoplasmic vesicle membrane. The protein resides in the endoplasmic reticulum membrane. Functionally, involved in the import of GDP-mannose from the cytoplasm into the Golgi lumen. In Vanderwaltozyma polyspora (strain ATCC 22028 / DSM 70294 / BCRC 21397 / CBS 2163 / NBRC 10782 / NRRL Y-8283 / UCD 57-17) (Kluyveromyces polysporus), this protein is GDP-mannose transporter 2 (VRG4-2).